The sequence spans 139 residues: Large ribosomal subunit protein uL16c (139 aa).

The protein belongs to the universal ribosomal protein uL16 family. As to quaternary structure, part of the 50S ribosomal subunit.

It localises to the plastid. Its subcellular location is the chloroplast. The protein is Large ribosomal subunit protein uL16c of Cicer arietinum (Chickpea).